The sequence spans 588 residues: Myc box-dependent-interacting protein 1 (588 aa).

Ala-2 is modified (N-acetylalanine). An interaction with BIN2 region spans residues 2–122 (AEMGSKGVTA…DYHQKLVDQA (121 aa)). Coiled coils occupy residues 15-42 (ASNV…TKDE) and 193-274 (HLVA…EKQH). In terms of domain architecture, BAR spans 29–276 (VLQKLGKADE…LVSLEKQHGS (248 aa)). The interval 279–355 (FTVKAQPSDN…PKHTPSKEMK (77 aa)) is disordered. 3 positions are modified to phosphoserine: Ser-296, Ser-298, and Ser-304. A Phosphothreonine modification is found at Thr-308. A phosphoserine mark is found at Ser-324 and Ser-332. Residues 379 to 422 (FEAPGPFSEQASLLDLDFEPLPPVASPVKAPTPSGQSIPWDLWE) form a clathrin-binding region. Residues 448–484 (PSQTAEPGPAQPAEASEVVGGAQEPGETAASEATSSS) are disordered. Residues 474–484 (ETAASEATSSS) are compositionally biased toward low complexity. The region spanning 515-588 (GFMFKVQAQH…FPENFTERVQ (74 aa)) is the SH3 domain.

Heterodimer with AMPH. Binds SH3GLB1. Interacts (via SH3 domain) with DNM1. Interacts with SYNJ1. Interacts (via SH3 domain) with DNM2. Interacts with CLTC. Interacts with AP2A2. Interacts with AP2B1. Interacts with MYC (via N-terminal transactivation domain); the interaction requires the integrity of the conserved MYC box regions 1 and 2. Interacts with BIN2. Interacts with SNX4. Interacts (via BAR domain) with BACE1. Binds (via BAR domain) F-actin. In terms of processing, phosphorylated by protein kinase C. Isoform 1 is expressed mainly in the brain. Isoform 2 is widely expressed.

It localises to the nucleus. It is found in the cytoplasm. The protein localises to the endosome. The protein resides in the cell membrane. Its subcellular location is the sarcolemma. It localises to the T-tubule. Is a key player in the control of plasma membrane curvature, and membrane shaping and remodeling. Required in muscle cells for the formation of T-tubules, tubular invaginations of the plasma membrane that function in depolarization-contraction coupling. Required in muscle cells for the formation of T-tubules, tubular invaginations of the plasma membrane that function in depolarization-contraction coupling. Is a negative regulator of endocytosis. Is also involved in the regulation of intracellular vesicles sorting, modulation of BACE1 trafficking and the control of amyloid-beta production. In neuronal circuits, endocytosis regulation may influence the internalization of PHF-tau aggregates. May be involved in the regulation of MYC activity and the control cell proliferation. The sequence is that of Myc box-dependent-interacting protein 1 (Bin1) from Mus musculus (Mouse).